An 828-amino-acid chain; its full sequence is Protein ELFN1 (828 aa).

A signal peptide spans 1 to 25; sequence MAGHGWGTAWVLVAAATLLHAGGLA. Residues 26–418 lie on the Extracellular side of the membrane; it reads QGDCWLIEGD…VPSPSTATHY (393 aa). LRR repeat units lie at residues 61 to 82, 85 to 106, 109 to 130, 133 to 154, and 157 to 178; these read TIVD…SLSR, NLTY…AFSG, NLQV…MLRG, KLEY…AFWE, and NIVN…TFAG. Residues asparagine 85, asparagine 90, and asparagine 122 are each glycosylated (N-linked (GlcNAc...) asparagine). Residues 190–253 enclose the LRRCT domain; that stretch reads NPFYCSCELL…LSKLQSVCTE (64 aa). Asparagine 210 carries N-linked (GlcNAc...) asparagine glycosylation. Positions 258–293 are disordered; the sequence is AEVLGPPRPVPGRSQPGHSPPPPPPEPSDMPCADDE. The segment covering 275–285 has biased composition (pro residues); the sequence is HSPPPPPPEPS. Residues 312–399 form the Fibronectin type-III domain; that stretch reads QTEARPSMKV…HNHTCLTICL (88 aa). Asparagine 376 carries N-linked (GlcNAc...) asparagine glycosylation. A helical transmembrane segment spans residues 419–439; that stretch reads IMTILGCLFGMVLVLGAVYYC. The Cytoplasmic portion of the chain corresponds to 440 to 828; sequence LRKRRRQEEK…WKGVSAQHKS (389 aa). Residues serine 460 and serine 646 each carry the phosphoserine modification. Disordered stretches follow at residues 627–674 and 697–731; these read HHSV…IEKS and KSRQ…GLGG. Positions 638-652 are enriched in low complexity; it reads RASTSSSGSARSPRT. Residues 697-706 show a composition bias toward basic and acidic residues; sequence KSRQYGEHRH. Residues 714–725 show a composition bias toward pro residues; sequence AEPPAPPPPPPT.

As to quaternary structure, interacts with PPP1CA. In terms of tissue distribution, selectively expressed in perialvear somatostatin (Sst)-containing interneurons.

The protein resides in the membrane. It is found in the cell projection. The protein localises to the dendrite. Postsynaptic protein that regulates circuit dynamics in the central nervous system by modulating the temporal dynamics of interneuron recruitment. Specifically present in excitatory synapses onto oriens-lacunosum molecular (OLM) interneurons and acts as a regulator of presynaptic release probability to direct the formation of highly facilitating pyramidal-OLM synapses. Inhibits phosphatase activity of protein phosphatase 1 (PP1) complexes. This is Protein ELFN1 (Elfn1) from Mus musculus (Mouse).